The sequence spans 209 residues: Putative AgrB-like protein (209 aa).

5 consecutive transmembrane segments (helical) span residues 49 to 71 (ILFL…AAFG), 82 to 102 (AKNS…GAYL), 105 to 125 (YLLF…LLLF), 149 to 169 (QAVL…DELI), and 173 to 193 (ISLS…KVLG).

The protein belongs to the AgrB family.

It is found in the cell membrane. May be involved in the proteolytic processing of a quorum sensing system signal molecule precursor. The polypeptide is Putative AgrB-like protein (Clostridium acetobutylicum (strain ATCC 824 / DSM 792 / JCM 1419 / IAM 19013 / LMG 5710 / NBRC 13948 / NRRL B-527 / VKM B-1787 / 2291 / W)).